Reading from the N-terminus, the 120-residue chain is ATP-dependent Clp protease adapter protein ClpS (120 aa).

The disordered stretch occupies residues 1–20 (MATKSPVNPKVPLVQEPDRD).

The protein belongs to the ClpS family. In terms of assembly, binds to the N-terminal domain of the chaperone ClpA.

Functionally, involved in the modulation of the specificity of the ClpAP-mediated ATP-dependent protein degradation. The chain is ATP-dependent Clp protease adapter protein ClpS from Albidiferax ferrireducens (strain ATCC BAA-621 / DSM 15236 / T118) (Rhodoferax ferrireducens).